The chain runs to 117 residues: Nitrogen regulatory protein GlnK1 (117 aa).

ADP-binding positions include Thr32, 40-42 (GAQ), and 92-95 (GSGK). Residues Thr32, 40–42 (GAQ), and 92–95 (GSGK) each bind ATP.

It belongs to the P(II) protein family. Homotrimer. Interacts and forms stable complexes with the glutamine synthetase GlnA1.

It localises to the cytoplasm. Its activity is regulated as follows. Inhibitory effects on GlnA1 are abolished in the presence of the effector 2-oxoglutarate. Involved in the regulation of nitrogen metabolism. Regulates the activity of its targets by protein-protein interaction in response to the nitrogen status of the cell. Allows finetuning control of the glutamine synthetase GlnA1 under changing nitrogen availabilities via direct protein interaction. The protein is Nitrogen regulatory protein GlnK1 of Methanosarcina mazei (strain ATCC BAA-159 / DSM 3647 / Goe1 / Go1 / JCM 11833 / OCM 88) (Methanosarcina frisia).